The primary structure comprises 303 residues: MYYGFDIGGTKIALGVFDSTRRLQWEKRVPTPHTSYSAFLDAVCELVAEADQRFGVKGSVGIGIPGMPETEDGTLYAANVPAASGKPLRADLSARLDRDVRLDNDANCFALSEAWDDEFTQYPLVMGLILGTGVGGGLVLNGKPITGQSYITGEFGHMRLPVDALTLMGFDFPLRRCGCGQMGCIENYLSGRGFAWLYQHYYDQSLQAPEIIALWEQGDEQAQAHVERYLNLLAVCLGNILTIVDPDLLVIGGGLSNFTAITTQLAERLPRHLLPVARAPRIERARHGDAGGMRGAAFLHLTD.

ATP is bound by residues 4–11 and 133–140; these read GFDIGGTK and GVGGGLVL. Zn(2+)-binding residues include H157, C177, C179, and C184.

It belongs to the ROK (NagC/XylR) family. NagK subfamily.

It catalyses the reaction N-acetyl-D-glucosamine + ATP = N-acetyl-D-glucosamine 6-phosphate + ADP + H(+). The protein operates within cell wall biogenesis; peptidoglycan recycling. Functionally, catalyzes the phosphorylation of N-acetyl-D-glucosamine (GlcNAc) derived from cell-wall degradation, yielding GlcNAc-6-P. The polypeptide is N-acetyl-D-glucosamine kinase (Salmonella paratyphi B (strain ATCC BAA-1250 / SPB7)).